We begin with the raw amino-acid sequence, 626 residues long: tRNA uridine 5-carboxymethylaminomethyl modification enzyme MnmG (626 aa).

14 to 19 is a binding site for FAD; the sequence is GAGHAG. 273-287 is an NAD(+) binding site; that stretch reads GPRYCPSIEDKVVRF.

Belongs to the MnmG family. Homodimer. Heterotetramer of two MnmE and two MnmG subunits. FAD serves as cofactor.

It is found in the cytoplasm. Functionally, NAD-binding protein involved in the addition of a carboxymethylaminomethyl (cmnm) group at the wobble position (U34) of certain tRNAs, forming tRNA-cmnm(5)s(2)U34. The sequence is that of tRNA uridine 5-carboxymethylaminomethyl modification enzyme MnmG from Caldicellulosiruptor saccharolyticus (strain ATCC 43494 / DSM 8903 / Tp8T 6331).